An 828-amino-acid chain; its full sequence is MSGSTASARNKHSKGNLKHNNNKNKNNDEPIDITKDEFERIREALGKEEFRKLFFEYVDEIQDPANRKIYEDEITQLEKERGVEVTFIHPQPGFVVKTSIDGEQKCFINIAGSPEIARPESKLDINPDTGDRGLSWSIPMAQTASRDDCDAKNQQCKVFDVVFHPDALHLGQKNSQFRKCLIDTALDAVEREYEVNLDRTNLKYPKLDYKGIARPTVIRKLSKNPTDEELEPHPLEHSFPTKPTAGEGEPKVLPMKVQKEQPKAPKFTEPKYSIKYSHDVDLSEYTNELDAKLQVTKPRALVVEIELPLLRSTAECELDVTSKSIYLLSERAGAKYRLKLDLPYTVDDKSGRARFDTDKRRLNIHLPVIRSNEPNLRLLSREDSGVELHSNSESPVEEEEDGEDEIEAEEEEEEVKTKVKPTSNPPSFLKSSLHYQLPGKFDCNLLDNCMAFTLHVANVQPDSIEYVQEKRSLHLQFASMGNGYYPTHYAFYVALPAKESQLIIENVEAEAWDNNVILKLDLNKSSESIESYLAGLDDQDLQDYAIHGQFKALKEAPVQEDKPGDIQFKRNDQEPSLEITVSGLNAVEQQEREEGEIEEAEEQQHKKSASKKQRGKRNKKERSLSESACVSLPTSVDSQPMATLKLPQRKQRSFSECHEQQHHHHRGILKRFSRYDGNDSCSSIDDCSSSYPCSVEASRSFGGIPEEDSSLSESCKKTVRFNDHIMKQVFRLDSSILGQRKKNQKRRDCKLRAQQRRLSEGDSADYEESTANKTQYCKYNKKHHHHHDSGLDLTRHNKKRELAEEADNKNSLMFEMDDDDDDEDEDLI.

5 disordered regions span residues Met-1 to Ile-31, Lys-223 to Pro-250, Asp-383 to Asn-424, Ala-556 to Ile-668, and Lys-741 to Ile-828. Over residues Arg-9–Asn-22 the composition is skewed to basic residues. The residue at position 384 (Ser-384) is a Phosphoserine. The segment covering Pro-395–Glu-414 has biased composition (acidic residues). Over residues Ala-556–Gln-573 the composition is skewed to basic and acidic residues. Over residues Glu-591–Glu-601 the composition is skewed to acidic residues. Positions Lys-606–Lys-620 are enriched in basic residues. Residues Ser-625 to Met-641 show a composition bias toward polar residues. Residues Lys-741–Gln-755 are compositionally biased toward basic residues. Ser-759 carries the post-translational modification Phosphoserine. Residues Asp-788 to Asn-808 are compositionally biased toward basic and acidic residues. A compositionally biased stretch (acidic residues) spans Glu-815–Ile-828.

The protein belongs to the PIH1 family. Kintoun subfamily. As to quaternary structure, interacts with Pp1alpha-96A, Pp1-87B, Pp1-13C and flw.

It is found in the cytoplasm. In terms of biological role, required for cytoplasmic pre-assembly of axonemal dyneins, thereby playing a central role in motility in cilia and flagella. Involved in pre-assembly of dynein arm complexes in the cytoplasm before intraflagellar transport loads them for the ciliary compartment. This is Protein kintoun from Drosophila willistoni (Fruit fly).